A 489-amino-acid chain; its full sequence is Dentin matrix acidic phosphoprotein 1 (489 aa).

Positions 1-16 are cleaved as a signal peptide; it reads MKTVILLTFLWGLSCA. The segment at 22–489 is disordered; sequence YQNTESESSE…QDDNDCQDGY (468 aa). Acidic residues predominate over residues 82–100; it reads DKEEDEDDSGDDTFGDEDN. Positions 123-138 are enriched in low complexity; it reads DTTQSSEDSTSQENSA. Basic and acidic residues-rich tracts occupy residues 143–159 and 217–227; these read SDSKDHHSDEADSRPEA and RSEESKGDHEP. Residues 263–274 show a composition bias toward polar residues; sequence DSNSRETQSVST. A compositionally biased stretch (basic and acidic residues) spans 275-287; sequence EDFRSKEESRSET. Over residues 316–332 the composition is skewed to low complexity; sequence EPSQESSSESQEGVASE. The Cell attachment site motif lies at 334-336; the sequence is RGD. A glycan (N-linked (GlcNAc...) asparagine) is linked at Asn340. Residues 346–358 are compositionally biased toward basic and acidic residues; that stretch reads DQRDSESSEEDRL. Asn378 carries an N-linked (GlcNAc...) asparagine glycan. A compositionally biased stretch (acidic residues) spans 386-397; it reads ESQESAQDEDSS. The span at 398–419 shows a compositional bias: low complexity; the sequence is SQEGLQSQSASRESRSQESQSE. Positions 420 to 442 are enriched in basic and acidic residues; sequence QDSRSEENRDSDSQDSSRSKEES. Residue Asn443 is glycosylated (N-linked (GlcNAc...) asparagine). The segment covering 453–478 has biased composition (basic and acidic residues); sequence EDNHPKNIEADNRKLIVDAYHNKPIG. Positions 479–489 are enriched in acidic residues; that stretch reads DQDDNDCQDGY.

In terms of assembly, interacts with importin alpha. In terms of processing, phosphorylated in the cytosol and extracellular matrix and unphosphorylated in the nucleus. Phosphorylation is necessary for nucleocytoplasmic transport and may be catalyzed by a nuclear isoform of CK2 and can be augmented by calcium. Phosphorylated (in vitro) by FAM20C in the extracellular medium at sites within the S-x-E/pS motif. In terms of tissue distribution, expressed in tooth particularly in odontoblast and ameloblast.

The protein localises to the nucleus. Its subcellular location is the cytoplasm. It is found in the secreted. It localises to the extracellular space. The protein resides in the extracellular matrix. Its function is as follows. May have a dual function during osteoblast differentiation. In the nucleus of undifferentiated osteoblasts, unphosphorylated form acts as a transcriptional component for activation of osteoblast-specific genes like osteocalcin. During the osteoblast to osteocyte transition phase it is phosphorylated and exported into the extracellular matrix, where it regulates nucleation of hydroxyapatite. This Rattus norvegicus (Rat) protein is Dentin matrix acidic phosphoprotein 1 (Dmp1).